The sequence spans 237 residues: Probable septum site-determining protein MinC (237 aa).

Belongs to the MinC family. As to quaternary structure, interacts with MinD and FtsZ.

In terms of biological role, cell division inhibitor that blocks the formation of polar Z ring septums. Rapidly oscillates between the poles of the cell to destabilize FtsZ filaments that have formed before they mature into polar Z rings. Prevents FtsZ polymerization. The protein is Probable septum site-determining protein MinC of Buchnera aphidicola subsp. Acyrthosiphon pisum (strain 5A).